Consider the following 1477-residue polypeptide: Inositol hexakisphosphate and diphosphoinositol-pentakisphosphate kinase 1 (1477 aa).

The segment at 27-47 is disordered; sequence TRGLGMRPEESDSELLEDEED. The segment covering 37-47 has biased composition (acidic residues); that stretch reads SDSELLEDEED. 64 to 65 serves as a coordination point for substrate; the sequence is KK. ATP is bound by residues arginine 145, lysine 198, histidine 205, arginine 224, 248–251, and 257–259; these read EEFM and DVK. Position 224 to 225 (224 to 225) interacts with substrate; the sequence is RK. Substrate-binding residues include lysine 259 and arginine 273. ATP is bound by residues serine 275, aspartate 320, and 332 to 334; that span reads DVN. 337–340 serves as a coordination point for substrate; the sequence is SFVK. Residues 382–453 form a polyphosphoinositide-binding domain region; that stretch reads PTTSGTMMEL…VLDITRLLLA (72 aa). Residues 910–1016 form a disordered region; the sequence is KGVEEEGSAP…PTEMKQSGLG (107 aa). 2 positions are modified to phosphoserine: serine 940 and serine 983. Over residues 1001–1016 the composition is skewed to polar residues; sequence FSSSRPPTEMKQSGLG. Serine 1033, serine 1069, serine 1141, and serine 1148 each carry phosphoserine. 2 disordered regions span residues 1131–1248 and 1438–1477; these read HSNQ…KPCQ and REEV…SFSH. A compositionally biased stretch (low complexity) spans 1164–1182; it reads SSGPSSTVSSAGPSSPTAV. The span at 1446–1460 shows a compositional bias: polar residues; that stretch reads CPPSNANPQSQSLAP.

This sequence belongs to the histidine acid phosphatase family. VIP1 subfamily.

It localises to the cytoplasm. The protein localises to the cytosol. It is found in the cell membrane. It catalyses the reaction 1D-myo-inositol hexakisphosphate + ATP = 1-diphospho-1D-myo-inositol 2,3,4,5,6-pentakisphosphate + ADP. The catalysed reaction is 5-diphospho-1D-myo-inositol 1,2,3,4,6-pentakisphosphate + ATP + H(+) = 1,5-bis(diphospho)-1D-myo-inositol 2,3,4,6-tetrakisphosphate + ADP. Its function is as follows. Bifunctional inositol kinase that acts in concert with the IP6K kinases IP6K1, IP6K2 and IP6K3 to synthesize the diphosphate group-containing inositol pyrophosphates diphosphoinositol pentakisphosphate, PP-InsP5, and bis-diphosphoinositol tetrakisphosphate, (PP)2-InsP4. PP-InsP5 and (PP)2-InsP4, also respectively called InsP7 and InsP8, regulate a variety of cellular processes, including apoptosis, vesicle trafficking, cytoskeletal dynamics, exocytosis, insulin signaling and neutrophil activation. Phosphorylates inositol hexakisphosphate (InsP6) at position 1 to produce PP-InsP5 which is in turn phosphorylated by IP6Ks to produce (PP)2-InsP4. Alternatively, phosphorylates PP-InsP5 at position 1, produced by IP6Ks from InsP6, to produce (PP)2-InsP4. Activated when cells are exposed to hyperosmotic stress. The polypeptide is Inositol hexakisphosphate and diphosphoinositol-pentakisphosphate kinase 1 (Bos taurus (Bovine)).